The chain runs to 115 residues: Ribonuclease P protein component (115 aa).

The protein belongs to the RnpA family. As to quaternary structure, consists of a catalytic RNA component (M1 or rnpB) and a protein subunit.

It catalyses the reaction Endonucleolytic cleavage of RNA, removing 5'-extranucleotides from tRNA precursor.. RNaseP catalyzes the removal of the 5'-leader sequence from pre-tRNA to produce the mature 5'-terminus. It can also cleave other RNA substrates such as 4.5S RNA. The protein component plays an auxiliary but essential role in vivo by binding to the 5'-leader sequence and broadening the substrate specificity of the ribozyme. This Phytoplasma australiense protein is Ribonuclease P protein component.